A 518-amino-acid chain; its full sequence is Glutamate--cysteine ligase (518 aa).

The protein belongs to the glutamate--cysteine ligase type 1 family. Type 1 subfamily.

It carries out the reaction L-cysteine + L-glutamate + ATP = gamma-L-glutamyl-L-cysteine + ADP + phosphate + H(+). It participates in sulfur metabolism; glutathione biosynthesis; glutathione from L-cysteine and L-glutamate: step 1/2. The sequence is that of Glutamate--cysteine ligase from Shigella flexneri serotype 5b (strain 8401).